The primary structure comprises 288 residues: MDVTAKYELIGLMAYPIRHSLSPEMQNKALEKAGLPFTYMAFEVDNDTFPAAIEGLKALKMRGTGVSMPNKQLACEYVDELTPAAKLVGAINTIVNDDGYLRGYNTDGTGHIRAIKESGFDIKGKTMVLLGAGGASTAIGAQGAIEGLKEIKLFNRRDEFFDKALAFAQRVNENTDCVVTVTDLADQQAFAEALASADILTNGTKVGMKPLENESLVNDISLLHPGLLVTECVYNPHMTKLLQQAQQAGCKTIDGYGMLLWQGAEQFTLWTGKDFPLEYVKQVMGFGA.

K71 and D107 together coordinate substrate. NAD(+)-binding positions include 132-135, 155-158, K205, 232-235, and G255; these read AGGA, NRRD, and CVYN.

It belongs to the shikimate dehydrogenase family. In terms of assembly, homodimer.

It carries out the reaction L-quinate + NAD(+) = 3-dehydroquinate + NADH + H(+). The catalysed reaction is L-quinate + NADP(+) = 3-dehydroquinate + NADPH + H(+). The enzyme catalyses shikimate + NADP(+) = 3-dehydroshikimate + NADPH + H(+). It catalyses the reaction shikimate + NAD(+) = 3-dehydroshikimate + NADH + H(+). The protein operates within metabolic intermediate biosynthesis; chorismate biosynthesis; chorismate from D-erythrose 4-phosphate and phosphoenolpyruvate: step 4/7. The actual biological function of YdiB remains unclear, nor is it known whether 3-dehydroshikimate or quinate represents the natural substrate. Catalyzes the reversible NAD-dependent reduction of both 3-dehydroshikimate (DHSA) and 3-dehydroquinate to yield shikimate (SA) and quinate, respectively. It can use both NAD or NADP for catalysis, however it has higher catalytic efficiency with NAD. The protein is Quinate/shikimate dehydrogenase of Escherichia coli O7:K1 (strain IAI39 / ExPEC).